The following is a 283-amino-acid chain: Tropomyosin (283 aa).

Residues 1-283 (MDAIKKKMQA…LDSAFVELIL (283 aa)) are a coiled coil.

The protein belongs to the tropomyosin family. As to quaternary structure, homodimer.

Its function is as follows. Tropomyosin, in association with the troponin complex, plays a central role in the calcium dependent regulation of muscle contraction. The protein is Tropomyosin of Locusta migratoria (Migratory locust).